A 204-amino-acid chain; its full sequence is Ricin B-like lectin R40G3 (204 aa).

The Ricin B-type lectin domain occupies Thr54–Ile200.

As to expression, expressed in shoots and lamina.

Lectin which binds carbohydrates in vitro. Interacts through its lectin domain with glycan structures containing specific motifs. This chain is Ricin B-like lectin R40G3, found in Oryza sativa subsp. japonica (Rice).